Here is a 92-residue protein sequence, read N- to C-terminus: Putative defensin-like protein 251 (92 aa).

The first 27 residues, 1-27, serve as a signal peptide directing secretion; it reads MRCVTSFVVFCILMFFVLNIFTVEVKA. 4 disulfide bridges follow: Cys34–Cys90, Cys45–Cys69, Cys53–Cys82, and Cys67–Cys84.

This sequence belongs to the DEFL family.

It localises to the secreted. This chain is Putative defensin-like protein 251 (SCRL12), found in Arabidopsis thaliana (Mouse-ear cress).